The sequence spans 889 residues: Envelope glycoprotein gp160 (889 aa).

The signal sequence occupies residues 1–22 (MGCLGNQLLIALLLLSASGIYC). At 23-704 (VQYVTVFYGI…TSWIKYIQYG (682 aa)) the chain is on the extracellular side. N-linked (GlcNAc...) asparagine; by host glycosylation is present at Asn37. Cys44 and Cys57 are disulfide-bonded. N-linked (GlcNAc...) asparagine; by host glycans are attached at residues Asn70 and Asn114. Disulfide bonds link Cys101-Cys226, Cys108-Cys217, Cys113-Cys175, Cys239-Cys269, and Cys249-Cys261. A V1 region spans residues 113–174 (CNKSETDRWG…TGLEQEPMVS (62 aa)). Positions 120–145 (RWGLTGTPAPTTTQTTTTQASTTPTS) are disordered. The span at 126-145 (TPAPTTTQTTTTQASTTPTS) shows a compositional bias: low complexity. N-linked (GlcNAc...) asparagine; by host glycosylation is found at Asn153, Asn163, Asn178, Asn191, Asn206, Asn218, Asn250, Asn253, Asn260, Asn284, Asn290, Asn301, Asn312, Asn322, Asn377, Asn422, Asn470, Asn486, and Asn489. Residues 175 to 217 (CKFNMTGLKRDKKREYNETWYSRDLVCEQNSNETDSKCYMNHC) form a V2 region. Residues 317–349 (CRRPGNKTVLPVTIMSGLVFHSQPINERPKQAW) form a V3 region. Cys317 and Cys350 are disulfide-bonded. 2 disulfide bridges follow: Cys401–Cys469 and Cys408–Cys442. The V4 stretch occupies residues 408-442 (CKMNWFLNWVENIQNGSRWTSQNQKERQRRNYVPC). The V5 stretch occupies residues 485 to 492 (GNETNITM). The tract at residues 536–556 (GVFVLGFLGFLATAGSAMSAA) is fusion peptide. Residues 599–615 (LQTRVTAIEKYLKDQAQ) form an immunosuppression region. N-linked (GlcNAc...) asparagine; by host glycosylation is found at Asn635, Asn644, and Asn660. A coiled-coil region spans residues 648–675 (QEWEKQVNFLEANITQSLEEAQIQQEKN). Positions 681 to 702 (KLNSWDIFGNWFDLTSWIKYIQ) are MPER; binding to GalCer. The chain crosses the membrane as a helical span at residues 705-725 (VLIVLGVIGLRIVIYVVQMLA). Residues 726-889 (RLRQGYRPVF…IRQGLELTLL (164 aa)) are Cytoplasmic-facing. Positions 731–734 (YRPV) match the YXXV motif; contains endocytosis signal motif. Residue Cys797 is the site of S-palmitoyl cysteine; by host attachment. The short motif at 888–889 (LL) is the Di-leucine internalization motif element.

In terms of assembly, the mature envelope protein (Env) consists of a homotrimer of non-covalently associated gp120-gp41 heterodimers. The resulting complex protrudes from the virus surface as a spike. Interacts with host CD4 and CCR5. Gp120 also interacts with the C-type lectins CD209/DC-SIGN and CLEC4M/DC-SIGNR (collectively referred to as DC-SIGN(R)). The mature envelope protein (Env) consists of a homotrimer of non-covalently associated gp120-gp41 heterodimers. The resulting complex protrudes from the virus surface as a spike. Specific enzymatic cleavages in vivo yield mature proteins. Envelope glycoproteins are synthesized as an inactive precursor that is heavily N-glycosylated and processed likely by host cell furin in the Golgi to yield the mature SU and TM proteins. The cleavage site between SU and TM requires the minimal sequence [KR]-X-[KR]-R. Post-translationally, palmitoylation of the transmembrane protein and of Env polyprotein (prior to its proteolytic cleavage) is essential for their association with host cell membrane lipid rafts. Palmitoylation is therefore required for envelope trafficking to classical lipid rafts, but not for viral replication.

Its subcellular location is the virion membrane. The protein resides in the host cell membrane. The protein localises to the host endosome membrane. In terms of biological role, the surface protein gp120 (SU) attaches the virus to the host lymphoid cell by binding to the primary receptor CD4. This interaction induces a structural rearrangement creating a high affinity binding site for a chemokine coreceptor like CCR5. This peculiar 2 stage receptor-interaction strategy allows gp120 to maintain the highly conserved coreceptor-binding site in a cryptic conformation, protected from neutralizing antibodies. These changes are transmitted to the transmembrane protein gp41 and are thought to activate its fusogenic potential by unmasking its fusion peptide. Its function is as follows. Surface protein gp120 (SU) may target the virus to gut-associated lymphoid tissue (GALT) by binding host ITGA4/ITGB7 (alpha-4/beta-7 integrins), a complex that mediates T-cell migration to the GALT. Interaction between gp120 and ITGA4/ITGB7 would allow the virus to enter GALT early in the infection, infecting and killing most of GALT's resting CD4+ T-cells. This T-cell depletion is believed to be the major insult to the host immune system leading to AIDS. Functionally, the surface protein gp120 is a ligand for CD209/DC-SIGN and CLEC4M/DC-SIGNR, which are respectively found on dendritic cells (DCs), and on endothelial cells of liver sinusoids and lymph node sinuses. These interactions allow capture of viral particles at mucosal surfaces by these cells and subsequent transmission to permissive cells. DCs are professional antigen presenting cells, critical for host immunity by inducing specific immune responses against a broad variety of pathogens. They act as sentinels in various tissues where they take up antigen, process it, and present it to T-cells following migration to lymphoid organs. SIV subverts the migration properties of dendritic cells to gain access to CD4+ T-cells in lymph nodes. Virus transmission to permissive T-cells occurs either in trans (without DCs infection, through viral capture and transmission), or in cis (following DCs productive infection, through the usual CD4-gp120 interaction), thereby inducing a robust infection. In trans infection, bound virions remain infectious over days and it is proposed that they are not degraded, but protected in non-lysosomal acidic organelles within the DCs close to the cell membrane thus contributing to the viral infectious potential during DCs' migration from the periphery to the lymphoid tissues. On arrival at lymphoid tissues, intact virions recycle back to DCs' cell surface allowing virus transmission to CD4+ T-cells. Virion capture also seems to lead to MHC-II-restricted viral antigen presentation, and probably to the activation of SIV-specific CD4+ cells. The transmembrane protein gp41 (TM) acts as a class I viral fusion protein. Under the current model, the protein has at least 3 conformational states: pre-fusion native state, pre-hairpin intermediate state, and post-fusion hairpin state. During fusion of viral and target intracellular membranes, the coiled coil regions (heptad repeats) assume a trimer-of-hairpins structure, positioning the fusion peptide in close proximity to the C-terminal region of the ectodomain. The formation of this structure appears to drive apposition and subsequent fusion of viral and target cell membranes. Complete fusion occurs in host cell endosomes. The virus undergoes clathrin-dependent internalization long before endosomal fusion, thus minimizing the surface exposure of conserved viral epitopes during fusion and reducing the efficacy of inhibitors targeting these epitopes. Membranes fusion leads to delivery of the nucleocapsid into the cytoplasm. In terms of biological role, the envelope glycoprotein gp160 precursor down-modulates cell surface CD4 antigen by interacting with it in the endoplasmic reticulum and blocking its transport to the cell surface. Its function is as follows. The gp120-gp41 heterodimer allows rapid transcytosis of the virus through CD4 negative cells such as simple epithelial monolayers of the intestinal, rectal and endocervical epithelial barriers. Both gp120 and gp41 specifically recognize glycosphingolipids galactosyl-ceramide (GalCer) or 3' sulfo-galactosyl-ceramide (GalS) present in the lipid rafts structures of epithelial cells. Binding to these alternative receptors allows the rapid transcytosis of the virus through the epithelial cells. This transcytotic vesicle-mediated transport of virions from the apical side to the basolateral side of the epithelial cells does not involve infection of the cells themselves. The protein is Envelope glycoprotein gp160 (env) of Simian immunodeficiency virus (isolate PBj14/BCL-3) (SIV-sm).